We begin with the raw amino-acid sequence, 304 residues long: WW domain-binding protein 1 (304 aa).

The segment at 1–26 (MARASSRNSSEEAWGSLQAPQQQQSP) is disordered. 2 short sequence motifs (PPxY motif) span residues 159–162 (PPAY) and 172–176 (PPPPY). Disordered regions lie at residues 206–235 (TNVE…VHIP) and 252–304 (CPCP…GDIP). Polar residues predominate over residues 209–218 (EGVSSQQSAL).

In terms of assembly, binds to the WW domain of YAP1, WWP1 and WWP2. Interacts with WWOX. Interacts with NEDD4.

The polypeptide is WW domain-binding protein 1 (Wbp1) (Mus musculus (Mouse)).